The sequence spans 628 residues: Phosphomethylpyrimidine synthase (628 aa).

Residues asparagine 228, methionine 257, tyrosine 286, histidine 322, 342–344 (SRG), 383–386 (DGLR), and glutamate 422 each bind substrate. Histidine 426 serves as a coordination point for Zn(2+). Substrate is bound at residue tyrosine 449. A Zn(2+)-binding site is contributed by histidine 490. Positions 570, 573, and 578 each coordinate [4Fe-4S] cluster.

It belongs to the ThiC family. As to quaternary structure, homodimer. The cofactor is [4Fe-4S] cluster.

It catalyses the reaction 5-amino-1-(5-phospho-beta-D-ribosyl)imidazole + S-adenosyl-L-methionine = 4-amino-2-methyl-5-(phosphooxymethyl)pyrimidine + CO + 5'-deoxyadenosine + formate + L-methionine + 3 H(+). It participates in cofactor biosynthesis; thiamine diphosphate biosynthesis. Catalyzes the synthesis of the hydroxymethylpyrimidine phosphate (HMP-P) moiety of thiamine from aminoimidazole ribotide (AIR) in a radical S-adenosyl-L-methionine (SAM)-dependent reaction. This Methylibium petroleiphilum (strain ATCC BAA-1232 / LMG 22953 / PM1) protein is Phosphomethylpyrimidine synthase.